The following is a 105-amino-acid chain: Replication restart protein PriB (105 aa).

The SSB domain occupies 1-102; the sequence is MTANRLTLSG…LHAEQIELID (102 aa).

It belongs to the PriB family. As to quaternary structure, homodimer. Interacts with PriA and DnaT. Component of the replication restart primosome. Primosome assembly occurs via a 'hand-off' mechanism. PriA binds to replication forks, subsequently PriB then DnaT bind; DnaT then displaces ssDNA to generate the helicase loading substrate.

Involved in the restart of stalled replication forks, which reloads the replicative helicase on sites other than the origin of replication; the PriA-PriB pathway is the major replication restart pathway. During primosome assembly it facilitates complex formation between PriA and DnaT on DNA; stabilizes PriA on DNA. Stimulates the DNA unwinding activity of PriA helicase. The protein is Replication restart protein PriB of Serratia proteamaculans (strain 568).